A 211-amino-acid polypeptide reads, in one-letter code: Small ribosomal subunit protein uS3 (211 aa).

The 69-residue stretch at 38 to 106 folds into the KH type-2 domain; the sequence is LRNFLKKRLY…EVYLNIQEVR (69 aa).

This sequence belongs to the universal ribosomal protein uS3 family. Part of the 30S ribosomal subunit. Forms a tight complex with proteins S10 and S14.

In terms of biological role, binds the lower part of the 30S subunit head. Binds mRNA in the 70S ribosome, positioning it for translation. The chain is Small ribosomal subunit protein uS3 from Citrifermentans bemidjiense (strain ATCC BAA-1014 / DSM 16622 / JCM 12645 / Bem) (Geobacter bemidjiensis).